The chain runs to 533 residues: uncharacterized protein (533 aa).

The next 5 helical transmembrane spans lie at 4–23 (FLAA…GLAI), 28–47 (VFGL…VVST), 57–79 (IVYQ…PAFF), 86–108 (GWKL…WVLI), and 151–173 (VIGY…AVGA). Residues 263-347 (LGEERETKIE…VAEVRRFLGD (85 aa)) enclose the RCK C-terminal domain. A run of 4 helical transmembrane segments spans residues 352–374 (LADV…GAIP), 379–401 (GGTT…LGAL), 422–444 (LGLA…AALT), and 454–476 (GGLV…VLRL).

It belongs to the AAE transporter (TC 2.A.81) family.

It localises to the cell membrane. This is an uncharacterized protein from Corynebacterium glutamicum (strain ATCC 13032 / DSM 20300 / JCM 1318 / BCRC 11384 / CCUG 27702 / LMG 3730 / NBRC 12168 / NCIMB 10025 / NRRL B-2784 / 534).